An 86-amino-acid polypeptide reads, in one-letter code: ATP synthase subunit c (86 aa).

The next 2 helical transmembrane spans lie at 8-28 (VLGC…GPGI) and 64-84 (TTGL…PLLG).

This sequence belongs to the ATPase C chain family. In terms of assembly, F-type ATPases have 2 components, F(1) - the catalytic core - and F(0) - the membrane proton channel. F(1) has five subunits: alpha(3), beta(3), gamma(1), delta(1), epsilon(1). F(0) has three main subunits: a(1), b(2) and c(10-14). The alpha and beta chains form an alternating ring which encloses part of the gamma chain. F(1) is attached to F(0) by a central stalk formed by the gamma and epsilon chains, while a peripheral stalk is formed by the delta and b chains.

It is found in the cell membrane. In terms of biological role, f(1)F(0) ATP synthase produces ATP from ADP in the presence of a proton or sodium gradient. F-type ATPases consist of two structural domains, F(1) containing the extramembraneous catalytic core and F(0) containing the membrane proton channel, linked together by a central stalk and a peripheral stalk. During catalysis, ATP synthesis in the catalytic domain of F(1) is coupled via a rotary mechanism of the central stalk subunits to proton translocation. Its function is as follows. Key component of the F(0) channel; it plays a direct role in translocation across the membrane. A homomeric c-ring of between 10-14 subunits forms the central stalk rotor element with the F(1) delta and epsilon subunits. This Lachnoclostridium phytofermentans (strain ATCC 700394 / DSM 18823 / ISDg) (Clostridium phytofermentans) protein is ATP synthase subunit c.